A 484-amino-acid chain; its full sequence is tRNA-2-methylthio-N(6)-dimethylallyladenosine synthase (484 aa).

The MTTase N-terminal domain maps to 36-153; it reads GKLYIKTHGC…LPELIRARRE (118 aa). [4Fe-4S] cluster contacts are provided by cysteine 45, cysteine 82, cysteine 116, cysteine 190, cysteine 194, and cysteine 197. One can recognise a Radical SAM core domain in the interval 176–415; sequence RAEGPSAFVS…HISAHAASIS (240 aa). The region spanning 416 to 479 is the TRAM domain; the sequence is QSMVGSVQRV…SNSLRGRIQL (64 aa). A disordered region spans residues 428–450; it reads EGPSRRDPNELTGKSENMRPVNF.

The protein belongs to the methylthiotransferase family. MiaB subfamily. In terms of assembly, monomer. [4Fe-4S] cluster serves as cofactor.

Its subcellular location is the cytoplasm. It catalyses the reaction N(6)-dimethylallyladenosine(37) in tRNA + (sulfur carrier)-SH + AH2 + 2 S-adenosyl-L-methionine = 2-methylsulfanyl-N(6)-dimethylallyladenosine(37) in tRNA + (sulfur carrier)-H + 5'-deoxyadenosine + L-methionine + A + S-adenosyl-L-homocysteine + 2 H(+). Its function is as follows. Catalyzes the methylthiolation of N6-(dimethylallyl)adenosine (i(6)A), leading to the formation of 2-methylthio-N6-(dimethylallyl)adenosine (ms(2)i(6)A) at position 37 in tRNAs that read codons beginning with uridine. This is tRNA-2-methylthio-N(6)-dimethylallyladenosine synthase from Xanthomonas oryzae pv. oryzae (strain MAFF 311018).